A 724-amino-acid polypeptide reads, in one-letter code: MFDTTPHSGRSTPSSSPSLRKRLQLLPPSRPPPEPEPGTMVEKGSDSSSEKGGVPGTPSTQSLGSRNFIRNSKKMQSWYSMLSPTYKQRNEDFRKLFSKLPEAERLIVDYSCALQREILLQGRLYLSENWICFYSNIFRWETTISIQLKEVTCLKKEKTAKLIPNAIQICTESEKHFFTSFGARDRCFLLIFRLWQNALLEKTLSPRELWHLVHQCYGSELGLTSEDEDYVSPLQLNGLGTPKEVGDVIALSDITSSGAADRSQEPSPVGSRRGHVTPNLSRASSDADHGAEEDKEEQVDSQPDASSSQTVTPVAEPPSTEPTQPDGPTTLGPLDLLPSEELLTDTSNSSSSTGEEADLAALLPDLSGRLLINSVFHVGAERLQQMLFSDSPFLQGFLQQCKFTDVTLSPWSGDSKCHQRRVLTYTIPISNPLGPKSASVVETQTLFRRGPQAGGCVVDSEVLTQGIPYQDYFYTAHRYCILGLARNKARLRVSSEIRYRKQPWSLVKSLIEKNSWSGIEDYFHHLERELAKAEKLSLEEGGKDARGLLSGLRRRKRPLSWRAHGDGPQHPDPDPCARAGIHTSGSLSSRFSEPSVDQGPGAGIPSALVLISIVICVSLIILIALNVLLFYRLWSLERTAHTFESWHSLALAKGKFPQTATEWAEILALQKQFHSVEVHKWRQILRASVELLDEMKFSLEKLHQGITVSDPPFDTQPRPDDSFS.

Positions 1–18 (MFDTTPHSGRSTPSSSPS) are enriched in low complexity. A disordered region spans residues 1–66 (MFDTTPHSGR…TPSTQSLGSR (66 aa)). Polar residues predominate over residues 57-66 (TPSTQSLGSR). Positions 91 to 158 (EDFRKLFSKL…KEVTCLKKEK (68 aa)) constitute a GRAM domain. The disordered stretch occupies residues 256–336 (SSGAADRSQE…GPTTLGPLDL (81 aa)). Phosphoserine occurs at positions 263, 267, and 271. Positions 300–312 (DSQPDASSSQTVT) are enriched in polar residues. A compositionally biased stretch (low complexity) spans 326–336 (DGPTTLGPLDL). A VASt domain is found at 367 to 538 (SGRLLINSVF…ELAKAEKLSL (172 aa)). The residue at position 415 (serine 415) is a Phosphoserine. Residues 560–579 (SWRAHGDGPQHPDPDPCARA) are disordered. The segment covering 563 to 575 (AHGDGPQHPDPDP) has biased composition (basic and acidic residues). A helical transmembrane segment spans residues 610-630 (LISIVICVSLIILIALNVLLF).

As to expression, expressed in liver.

The protein resides in the endoplasmic reticulum membrane. The protein localises to the cell membrane. It localises to the cytoplasmic vesicle. It is found in the autophagosome. Its function is as follows. Cholesterol transporter that mediates non-vesicular transport of cholesterol from the plasma membrane (PM) to the endoplasmic reticulum (ER). Contains unique domains for binding cholesterol and the PM, thereby serving as a molecular bridge for the transfer of cholesterol from the PM to the ER. Plays a crucial role in cholesterol homeostasis and has the unique ability to localize to the PM based on the level of membrane cholesterol. In lipid-poor conditions localizes to the ER membrane and in response to excess cholesterol in the PM is recruited to the endoplasmic reticulum-plasma membrane contact sites (EPCS) which is mediated by the GRAM domain. At the EPCS, the sterol-binding VASt/ASTER domain binds to the cholesterol in the PM and facilitates its transfer from the PM to ER. May play a role in tumor progression. Plays a role in autophagy regulation and is required for biogenesis of the autophagosome. This function in autophagy requires its cholesterol-transfer activity. The chain is Protein Aster-A from Homo sapiens (Human).